Here is a 347-residue protein sequence, read N- to C-terminus: 5-deoxyribose 1-phosphate isomerase (347 aa).

Residues 48 to 50, Arg91, and Gln198 contribute to the substrate site; that span reads RGA. Asp239 acts as the Proton donor in catalysis. 249-250 contributes to the substrate binding site; that stretch reads NK.

It belongs to the EIF-2B alpha/beta/delta subunits family. DrdI subfamily.

It carries out the reaction 5-deoxy-alpha-D-ribose 1-phosphate = 5-deoxy-D-ribulose 1-phosphate. It functions in the pathway carbohydrate degradation. Catalyzes the isomerization of 5-deoxy-alpha-D-ribose 1-phosphate to 5-deoxy-D-ribulose 1-phosphate, as part of a 5-deoxyribose salvage pathway that recycles this toxic radical SAM enzyme by-product to mainstream metabolites. In Bacillus cereus (strain ATCC 14579 / DSM 31 / CCUG 7414 / JCM 2152 / NBRC 15305 / NCIMB 9373 / NCTC 2599 / NRRL B-3711), this protein is 5-deoxyribose 1-phosphate isomerase.